We begin with the raw amino-acid sequence, 236 residues long: CDP-diacylglycerol--glycerol-3-phosphate 3-phosphatidyltransferase (236 aa).

Transmembrane regions (helical) follow at residues 39–59, 66–86, 120–140, 163–183, and 196–216; these read IFIA…GVLA, ISIS…TAVI, VLIA…VFIV, WLGK…CFVW, and GLFF…FSIW.

This sequence belongs to the CDP-alcohol phosphatidyltransferase class-I family.

Its subcellular location is the cell membrane. It carries out the reaction a CDP-1,2-diacyl-sn-glycerol + sn-glycerol 3-phosphate = a 1,2-diacyl-sn-glycero-3-phospho-(1'-sn-glycero-3'-phosphate) + CMP + H(+). It participates in phospholipid metabolism; phosphatidylglycerol biosynthesis; phosphatidylglycerol from CDP-diacylglycerol: step 1/2. This protein catalyzes the committed step to the synthesis of the acidic phospholipids. In Mycoplasma genitalium (strain ATCC 33530 / DSM 19775 / NCTC 10195 / G37) (Mycoplasmoides genitalium), this protein is CDP-diacylglycerol--glycerol-3-phosphate 3-phosphatidyltransferase (pgsA).